A 174-amino-acid polypeptide reads, in one-letter code: 2-C-methyl-D-erythritol 2,4-cyclodiphosphate synthase (174 aa).

A divalent metal cation contacts are provided by Asp13, His15, and His61. Position 13–15 (13–15 (DAH)) interacts with 4-CDP-2-C-methyl-D-erythritol 2-phosphate. 4-CDP-2-C-methyl-D-erythritol 2-phosphate contacts are provided by residues 75 to 77 (DIG), 149 to 152 (TTTD), Phe156, and Arg159.

The protein belongs to the IspF family. As to quaternary structure, homotrimer. A divalent metal cation is required as a cofactor.

The enzyme catalyses 4-CDP-2-C-methyl-D-erythritol 2-phosphate = 2-C-methyl-D-erythritol 2,4-cyclic diphosphate + CMP. It functions in the pathway isoprenoid biosynthesis; isopentenyl diphosphate biosynthesis via DXP pathway; isopentenyl diphosphate from 1-deoxy-D-xylulose 5-phosphate: step 4/6. Involved in the biosynthesis of isopentenyl diphosphate (IPP) and dimethylallyl diphosphate (DMAPP), two major building blocks of isoprenoid compounds. Catalyzes the conversion of 4-diphosphocytidyl-2-C-methyl-D-erythritol 2-phosphate (CDP-ME2P) to 2-C-methyl-D-erythritol 2,4-cyclodiphosphate (ME-CPP) with a corresponding release of cytidine 5-monophosphate (CMP). The chain is 2-C-methyl-D-erythritol 2,4-cyclodiphosphate synthase from Bifidobacterium longum subsp. infantis (strain ATCC 15697 / DSM 20088 / JCM 1222 / NCTC 11817 / S12).